Reading from the N-terminus, the 97-residue chain is Putative membrane protein insertion efficiency factor (97 aa).

The interval 72–97 (VPGAEPDQEQHQCTPLCNHHSEDHSQ) is disordered.

It belongs to the UPF0161 family.

The protein localises to the cell inner membrane. Functionally, could be involved in insertion of integral membrane proteins into the membrane. The sequence is that of Putative membrane protein insertion efficiency factor from Alcanivorax borkumensis (strain ATCC 700651 / DSM 11573 / NCIMB 13689 / SK2).